The sequence spans 550 residues: Glucose-6-phosphate isomerase (550 aa).

Residue Glu356 is the Proton donor of the active site. Residues His387 and Lys515 contribute to the active site.

It belongs to the GPI family.

It is found in the cytoplasm. It catalyses the reaction alpha-D-glucose 6-phosphate = beta-D-fructose 6-phosphate. Its pathway is carbohydrate biosynthesis; gluconeogenesis. The protein operates within carbohydrate degradation; glycolysis; D-glyceraldehyde 3-phosphate and glycerone phosphate from D-glucose: step 2/4. Its function is as follows. Catalyzes the reversible isomerization of glucose-6-phosphate to fructose-6-phosphate. This chain is Glucose-6-phosphate isomerase, found in Photobacterium profundum (strain SS9).